Consider the following 186-residue polypeptide: Tumor necrosis factor, alpha-induced protein 8-like protein 2 B (186 aa).

This sequence belongs to the TNFAIP8 family. TNFAIP8L2 subfamily.

Its function is as follows. Acts as a negative regulator of innate and adaptive immunity by maintaining immune homeostasis. Negative regulator of Toll-like receptor and T-cell receptor function. Prevents hyperresponsiveness of the immune system and maintains immune homeostasis. Inhibits jun/ap1 and NF-kappa-B activation. Promotes Fas-induced apoptosis. This chain is Tumor necrosis factor, alpha-induced protein 8-like protein 2 B (tnfaip8l2b), found in Danio rerio (Zebrafish).